The following is a 1931-amino-acid chain: Cytadherence high molecular weight protein 2 (1931 aa).

Coiled coils occupy residues Lys1626–Ser1659, Phe1768–Asn1846, and His1903–Ser1930.

Component of the cytoskeleton-like structure which stabilizes the shape of the wall-less Mycoplasma. This cytoskeleton-like network of accessory proteins containing HMW proteins 1 to 5 allows the proper anchoring of cytadhesin proteins in the mycoplasmal membrane at the attachment organelle. This chain is Cytadherence high molecular weight protein 2 (hlp2), found in Mycoplasmoides gallisepticum (strain R(low / passage 15 / clone 2)) (Mycoplasma gallisepticum).